The primary structure comprises 455 residues: Serine--tRNA ligase (455 aa).

252–254 (TAE) contributes to the L-serine binding site. ATP-binding positions include 283–285 (RKE) and V299. E306 serves as a coordination point for L-serine. Residue 370-373 (EVVS) participates in ATP binding. T406 is a binding site for L-serine.

The protein belongs to the class-II aminoacyl-tRNA synthetase family. Type-1 seryl-tRNA synthetase subfamily. As to quaternary structure, homodimer. The tRNA molecule binds across the dimer.

Its subcellular location is the cytoplasm. It catalyses the reaction tRNA(Ser) + L-serine + ATP = L-seryl-tRNA(Ser) + AMP + diphosphate + H(+). It carries out the reaction tRNA(Sec) + L-serine + ATP = L-seryl-tRNA(Sec) + AMP + diphosphate + H(+). It participates in aminoacyl-tRNA biosynthesis; selenocysteinyl-tRNA(Sec) biosynthesis; L-seryl-tRNA(Sec) from L-serine and tRNA(Sec): step 1/1. Functionally, catalyzes the attachment of serine to tRNA(Ser). Is also able to aminoacylate tRNA(Sec) with serine, to form the misacylated tRNA L-seryl-tRNA(Sec), which will be further converted into selenocysteinyl-tRNA(Sec). The chain is Serine--tRNA ligase from Pyrococcus furiosus (strain ATCC 43587 / DSM 3638 / JCM 8422 / Vc1).